A 324-amino-acid polypeptide reads, in one-letter code: Beta-ketoacyl-[acyl-carrier-protein] synthase III (324 aa).

Catalysis depends on residues Cys112 and His249. Residues Gln250 to Arg254 form an ACP-binding region. The active site involves Asn279.

Belongs to the thiolase-like superfamily. FabH family. As to quaternary structure, homodimer.

The protein localises to the cytoplasm. It catalyses the reaction malonyl-[ACP] + acetyl-CoA + H(+) = 3-oxobutanoyl-[ACP] + CO2 + CoA. It participates in lipid metabolism; fatty acid biosynthesis. Its function is as follows. Catalyzes the condensation reaction of fatty acid synthesis by the addition to an acyl acceptor of two carbons from malonyl-ACP. Catalyzes the first condensation reaction which initiates fatty acid synthesis and may therefore play a role in governing the total rate of fatty acid production. Possesses both acetoacetyl-ACP synthase and acetyl transacylase activities. Its substrate specificity determines the biosynthesis of branched-chain and/or straight-chain of fatty acids. This is Beta-ketoacyl-[acyl-carrier-protein] synthase III from Streptococcus equi subsp. zooepidemicus (strain H70).